Reading from the N-terminus, the 267-residue chain is Hydroxyacylglutathione hydrolase (267 aa).

Zn(2+) is bound by residues H55, H57, D59, H60, H121, D138, and H176.

This sequence belongs to the metallo-beta-lactamase superfamily. Glyoxalase II family. In terms of assembly, monomer. It depends on Zn(2+) as a cofactor.

The enzyme catalyses an S-(2-hydroxyacyl)glutathione + H2O = a 2-hydroxy carboxylate + glutathione + H(+). It participates in secondary metabolite metabolism; methylglyoxal degradation; (R)-lactate from methylglyoxal: step 2/2. In terms of biological role, thiolesterase that catalyzes the hydrolysis of S-D-lactoyl-glutathione to form glutathione and D-lactic acid. The polypeptide is Hydroxyacylglutathione hydrolase (Shewanella sp. (strain ANA-3)).